The primary structure comprises 1393 residues: DNA-directed RNA polymerase subunit beta' (1393 aa).

4 residues coordinate Zn(2+): Cys71, Cys73, Cys86, and Cys89. Residues Asp462, Asp464, and Asp466 each coordinate Mg(2+). 4 residues coordinate Zn(2+): Cys811, Cys885, Cys892, and Cys895.

It belongs to the RNA polymerase beta' chain family. As to quaternary structure, the RNAP catalytic core consists of 2 alpha, 1 beta, 1 beta' and 1 omega subunit. When a sigma factor is associated with the core the holoenzyme is formed, which can initiate transcription. It depends on Mg(2+) as a cofactor. Zn(2+) serves as cofactor.

The enzyme catalyses RNA(n) + a ribonucleoside 5'-triphosphate = RNA(n+1) + diphosphate. Functionally, DNA-dependent RNA polymerase catalyzes the transcription of DNA into RNA using the four ribonucleoside triphosphates as substrates. The chain is DNA-directed RNA polymerase subunit beta' from Azorhizobium caulinodans (strain ATCC 43989 / DSM 5975 / JCM 20966 / LMG 6465 / NBRC 14845 / NCIMB 13405 / ORS 571).